We begin with the raw amino-acid sequence, 164 residues long: Rhomboid-related protein 1 (164 aa).

The next 4 helical transmembrane spans lie at 10 to 30 (GFNA…HGVL), 32 to 52 (ISLL…ITDM), 56 to 76 (VVGG…NVVM), and 120 to 140 (PSFM…LTIL). Serine 60 (nucleophile) is an active-site residue. Residue histidine 125 is part of the active site.

Belongs to the peptidase S54 family.

Its subcellular location is the membrane. The enzyme catalyses Cleaves type-1 transmembrane domains using a catalytic dyad composed of serine and histidine that are contributed by different transmembrane domains.. May be involved in regulated intramembrane proteolysis and the subsequent release of functional polypeptides from their membrane anchors. This Rattus norvegicus (Rat) protein is Rhomboid-related protein 1 (Rhbdl1).